The primary structure comprises 466 residues: Ribulose bisphosphate carboxylase large chain (466 aa).

Lys5 is modified (N6,N6,N6-trimethyllysine). 2 residues coordinate substrate: Asn114 and Thr164. Catalysis depends on Lys166, which acts as the Proton acceptor. Lys168 is a binding site for substrate. Positions 192, 194, and 195 each coordinate Mg(2+). Lys192 is modified (N6-carboxylysine). His285 acts as the Proton acceptor in catalysis. Residues Arg286, His318, and Ser370 each contribute to the substrate site.

The protein belongs to the RuBisCO large chain family. Type I subfamily. Heterohexadecamer of 8 large chains and 8 small chains; disulfide-linked. The disulfide link is formed within the large subunit homodimers. The cofactor is Mg(2+). The disulfide bond which can form in the large chain dimeric partners within the hexadecamer appears to be associated with oxidative stress and protein turnover.

It is found in the plastid. Its subcellular location is the chloroplast. It catalyses the reaction 2 (2R)-3-phosphoglycerate + 2 H(+) = D-ribulose 1,5-bisphosphate + CO2 + H2O. It carries out the reaction D-ribulose 1,5-bisphosphate + O2 = 2-phosphoglycolate + (2R)-3-phosphoglycerate + 2 H(+). RuBisCO catalyzes two reactions: the carboxylation of D-ribulose 1,5-bisphosphate, the primary event in carbon dioxide fixation, as well as the oxidative fragmentation of the pentose substrate in the photorespiration process. Both reactions occur simultaneously and in competition at the same active site. The protein is Ribulose bisphosphate carboxylase large chain of Berzelia lanuginosa (Buttonbush).